The following is a 479-amino-acid chain: Altronate oxidoreductase (479 aa).

Residue 18–29 (IIQFGEGNFLRA) coordinates NAD(+).

The protein belongs to the mannitol dehydrogenase family. UxaB subfamily.

It carries out the reaction D-altronate + NAD(+) = keto-D-tagaturonate + NADH + H(+). It participates in carbohydrate metabolism; pentose and glucuronate interconversion. The protein is Altronate oxidoreductase of Bacteroides thetaiotaomicron (strain ATCC 29148 / DSM 2079 / JCM 5827 / CCUG 10774 / NCTC 10582 / VPI-5482 / E50).